The chain runs to 721 residues: Rho GTPase-activating protein gacY (721 aa).

The segment at 1–325 (MDSSFKRASF…PQQPQQQQST (325 aa)) is disordered. Low complexity predominate over residues 17 to 33 (NIDNINEMNNNNMNTAP). A compositionally biased stretch (pro residues) spans 34–44 (APAPAPIPTPQ). Residues 146–168 (DNNNNGNNNNNNNNNDNNNNNNN) are compositionally biased toward low complexity. Residues 169–181 (NDDDDEDEDDDEY) are compositionally biased toward acidic residues. Composition is skewed to polar residues over residues 182 to 202 (SNVS…NTMN) and 219 to 240 (KNDS…SSRR). A compositionally biased stretch (low complexity) spans 308 to 323 (QQQQQPQQPQQPQQQQ). The CRAL-TRIO domain occupies 363 to 520 (KSQRFPEIEA…AIMMHRPAGK (158 aa)). Residues 528 to 719 (APLEDVINRP…LILDNINILF (192 aa)) form the Rho-GAP domain.

It is found in the cytoplasm. Its function is as follows. Rho GTPase-activating protein involved in the signal transduction pathway. The sequence is that of Rho GTPase-activating protein gacY (gacY) from Dictyostelium discoideum (Social amoeba).